A 346-amino-acid chain; its full sequence is HLA class I histocompatibility antigen, alpha chain F (346 aa).

The signal sequence occupies residues 1–21 (MAPRSLLLLLSGALALTDTWA). Residues 22–111 (GSHSLRYFST…LLRRYNQSEA (90 aa)) form an alpha-1 region. Over 22–305 (GSHSLRYFST…EQSPQPTIPI (284 aa)) the chain is Extracellular. Residues N91 and R105 each coordinate a peptide antigen. An N-linked (GlcNAc...) asparagine glycan is attached at N107. Positions 112–203 (GSHTLQGMNG…ENGKETLQRA (92 aa)) are alpha-2. Disulfide bonds link C122-C185 and C224-C280. A peptide antigen contacts are provided by T164, Y168, and E176. The segment at 204 to 295 (DPPKAHVAHH…GLPQPLILRW (92 aa)) is alpha-3. The Ig-like C1-type domain occupies 206–296 (PKAHVAHHPI…LPQPLILRWE (91 aa)). The interval 296-305 (EQSPQPTIPI) is connecting peptide. Residues 306–329 (VGIVAGLVVLGAVVTGAVVAAVMW) form a helical membrane-spanning segment. Residues 330–346 (RKKSSDRNRGSYSQAAV) are Cytoplasmic-facing. The short motif at 336-338 (RNR) is the Sorting signal sequence; Golgi-retention signal; ER-retention signal element.

It belongs to the MHC class I family. In terms of assembly, forms a heterotrimer with B2M and a self-peptide. Binds a diverse number of peptides ranging from 7 to more than 30 amino acids. Peptide-bound HLA-F-B2M interacts with LILRB1 and LILRB2 but not with KIR3DS1 or KIR3DL2; this interaction is direct. The OC form interacts with KIR3DS1, KIR2DS4 and KIR3DL2; this interaction is direct. Interacts with TAP1-TAP2 complex and CALR; this interaction is required for appropriate folding and peptide loading. Interacts with the coat protein complex II and 14-3-3 proteins; these interactions likely control the anterograde ER-to-Golgi transport of HLA-F. HLA-F-B2M complex interacts with the heavy chain of other MHC class I molecules including HLA-A and HLA-E; this interaction may regulate the intracellular trafficking and the stability of peptide-free MHC class I OCs. In terms of processing, N-glycosylated. Expressed in resting B cells (at protein level). Expressed in secondary lymphoid organs rich in B and T cells such as the tonsils, spleen, and thymus (at protein level). Expressed in the endothelial cells of the tonsils. Expressed on activated lymphoid cells including B cells, NK cells, CD4+ T cells and memory T cells (at protein level). Expressed in motor neurons of spinal cord.

The protein localises to the cell membrane. It localises to the early endosome membrane. It is found in the lysosome membrane. Non-classical major histocompatibility class Ib molecule postulated to play a role in immune surveillance, immune tolerance and inflammation. Functions in two forms, as a heterotrimeric complex with B2M/beta-2 microglobulin and a peptide (peptide-bound HLA-F-B2M) and as an open conformer (OC) devoid of peptide and B2M (peptide-free OC). In complex with B2M, presents non-canonical self-peptides carrying post-translational modifications, particularly phosphorylated self-peptides. Peptide-bound HLA-F-B2M acts as a ligand for LILRB1 inhibitory receptor, a major player in maternal-fetal tolerance. Peptide-free OC acts as a ligand for KIR3DS1 and KIR3DL2 receptors. Upon interaction with activating KIR3DS1 receptor on NK cells, triggers NK cell degranulation and anti-viral cytokine production. Through interaction with KIR3DL2 receptor, inhibits NK and T cell effector functions. May interact with other MHC class I OCs to cross-present exogenous viral, tumor or minor histompatibility antigens to cytotoxic CD8+ T cells, triggering effector and memory responses. May play a role in inflammatory responses in the peripheral nervous system. Through interaction with KIR3DL2, may protect motor neurons from astrocyte-induced toxicity. The sequence is that of HLA class I histocompatibility antigen, alpha chain F from Homo sapiens (Human).